A 218-amino-acid chain; its full sequence is uncharacterized protein (218 aa).

The helical transmembrane segment at 11–31 (AAGLFPLALMLSGCISYALVS) threads the bilayer.

Its subcellular location is the membrane. This is an uncharacterized protein from Escherichia coli (strain K12).